Reading from the N-terminus, the 353-residue chain is Putative permease PerM (353 aa).

The next 7 membrane-spanning stretches (helical) occupy residues 19 to 39, 72 to 92, 156 to 176, 217 to 237, 240 to 260, 281 to 301, and 310 to 330; these read IALLVILVAGFGIIFFFSGLL, IVLVVFVGILLLMAFVVLPIA, LVGLLTIAVYLVLVPLMVFFL, VLEMIVVGIATWLGFLLFGLN, LLLAVLVGFSVLIPYIGAFVV, CFAVYLIIQALDGNLLVPVLF, and LVIILSVVIFGGLWGFWGVFF.

This sequence belongs to the autoinducer-2 exporter (AI-2E) (TC 2.A.86) family.

It is found in the cell membrane. The sequence is that of Putative permease PerM (perM) from Escherichia coli O157:H7.